Here is a 162-residue protein sequence, read N- to C-terminus: Phosphopantetheine adenylyltransferase (162 aa).

Residue serine 11 participates in substrate binding. ATP contacts are provided by residues 11 to 12 (SF) and histidine 19. Positions 43, 76, and 90 each coordinate substrate. ATP contacts are provided by residues 91 to 93 (GLR), glutamate 101, and 126 to 132 (LKFVSSS).

It belongs to the bacterial CoaD family. Homohexamer. Mg(2+) serves as cofactor.

The protein localises to the cytoplasm. The enzyme catalyses (R)-4'-phosphopantetheine + ATP + H(+) = 3'-dephospho-CoA + diphosphate. The protein operates within cofactor biosynthesis; coenzyme A biosynthesis; CoA from (R)-pantothenate: step 4/5. Functionally, reversibly transfers an adenylyl group from ATP to 4'-phosphopantetheine, yielding dephospho-CoA (dPCoA) and pyrophosphate. In Streptococcus suis (strain 05ZYH33), this protein is Phosphopantetheine adenylyltransferase.